The primary structure comprises 497 residues: Glycerol kinase (497 aa).

T13 is a binding site for ADP. T13, T14, and S15 together coordinate ATP. T13 lines the sn-glycerol 3-phosphate pocket. An ADP-binding site is contributed by R17. Positions 83, 84, and 135 each coordinate sn-glycerol 3-phosphate. Residues R83, E84, and Y135 each contribute to the glycerol site. Phosphohistidine; by HPr is present on H231. D245 is a binding site for sn-glycerol 3-phosphate. Residues D245 and Q246 each contribute to the glycerol site. 2 residues coordinate ADP: T267 and G310. Positions 267, 310, 314, and 411 each coordinate ATP. The ADP site is built by G411 and N415.

It belongs to the FGGY kinase family. As to quaternary structure, homotetramer and homodimer (in equilibrium). In terms of processing, the phosphoenolpyruvate-dependent sugar phosphotransferase system (PTS), including enzyme I, and histidine-containing protein (HPr) are required for the phosphorylation, which leads to the activation of the enzyme.

It catalyses the reaction glycerol + ATP = sn-glycerol 3-phosphate + ADP + H(+). It participates in polyol metabolism; glycerol degradation via glycerol kinase pathway; sn-glycerol 3-phosphate from glycerol: step 1/1. Its activity is regulated as follows. Activated by phosphorylation and inhibited by fructose 1,6-bisphosphate (FBP). Functionally, key enzyme in the regulation of glycerol uptake and metabolism. Catalyzes the phosphorylation of glycerol to yield sn-glycerol 3-phosphate. The polypeptide is Glycerol kinase (Halalkalibacterium halodurans (strain ATCC BAA-125 / DSM 18197 / FERM 7344 / JCM 9153 / C-125) (Bacillus halodurans)).